The chain runs to 340 residues: Selenide, water dikinase (340 aa).

Selenocysteine 17 is a catalytic residue. Selenocysteine 17 is a non-standard amino acid (selenocysteine). ATP is bound by residues lysine 20 and 45–47; that span reads NNE. Aspartate 48 contacts Mg(2+). Residues aspartate 65, aspartate 88, and 136–138 each bind ATP; that span reads GHT. Aspartate 88 serves as a coordination point for Mg(2+). Residue aspartate 224 participates in Mg(2+) binding.

It belongs to the selenophosphate synthase 1 family. Class I subfamily. In terms of assembly, homodimer. Requires Mg(2+) as cofactor.

It catalyses the reaction hydrogenselenide + ATP + H2O = selenophosphate + AMP + phosphate + 2 H(+). Synthesizes selenophosphate from selenide and ATP. This Campylobacter jejuni (strain RM1221) protein is Selenide, water dikinase.